A 154-amino-acid chain; its full sequence is Ubiquitin-like protein 4A-A (154 aa).

In terms of domain architecture, Ubiquitin-like spans 1-76 (MILTVKPLQG…LNLVVRPAGE (76 aa)).

Component of the BAT3 complex.

The protein resides in the cytoplasm. Its subcellular location is the cytosol. In terms of biological role, component of the BAT3 complex, a multiprotein complex involved in the post-translational delivery of tail-anchored (TA) membrane proteins to the endoplasmic reticulum membrane. TA membrane proteins, also named type II transmembrane proteins, contain a single C-terminal transmembrane region. In Salmo salar (Atlantic salmon), this protein is Ubiquitin-like protein 4A-A (ubl4aa).